Reading from the N-terminus, the 358-residue chain is Protein RecA (358 aa).

67 to 74 is a binding site for ATP; the sequence is GPESSGKT.

It belongs to the RecA family.

The protein resides in the cytoplasm. In terms of biological role, can catalyze the hydrolysis of ATP in the presence of single-stranded DNA, the ATP-dependent uptake of single-stranded DNA by duplex DNA, and the ATP-dependent hybridization of homologous single-stranded DNAs. It interacts with LexA causing its activation and leading to its autocatalytic cleavage. The polypeptide is Protein RecA (Xenorhabdus nematophila (strain ATCC 19061 / DSM 3370 / CCUG 14189 / LMG 1036 / NCIMB 9965 / AN6)).